The chain runs to 402 residues: Myb-related protein 1 (402 aa).

One can recognise an HTH myb-type domain in the interval Thr-42–Asn-102. The H-T-H motif DNA-binding region spans Pro-73–Arg-98. The stretch at Ser-148–Gln-168 forms a coiled coil. Residues Leu-161–Glu-166 carry the LHEQLE motif. Polar residues predominate over residues Gln-238–Thr-260. Disordered stretches follow at residues Gln-238–Met-266, Glu-344–Asn-363, and His-382–Asn-402.

The protein belongs to the MYB-CC family. In terms of assembly, isoforms 1 and 2: homodimer. Isoform 3: loss of dimerization. As to expression, expressed in phloem and/or cambium.

The protein resides in the nucleus. Functionally, transcription factor that may act on the GAL1 promoter. Acts redundantly with MYR2 as a repressor of flowering and organ elongation under decreased light intensity. Represses gibberellic acid (GA)-dependent responses and affects levels of bioactive GA. This chain is Myb-related protein 1, found in Arabidopsis thaliana (Mouse-ear cress).